A 447-amino-acid polypeptide reads, in one-letter code: Phosphoglucosamine mutase (447 aa).

Catalysis depends on Ser-108, which acts as the Phosphoserine intermediate. Mg(2+) contacts are provided by Ser-108, Asp-247, Asp-249, and Asp-251. At Ser-108 the chain carries Phosphoserine.

The protein belongs to the phosphohexose mutase family. Requires Mg(2+) as cofactor. Post-translationally, activated by phosphorylation.

It carries out the reaction alpha-D-glucosamine 1-phosphate = D-glucosamine 6-phosphate. Its function is as follows. Catalyzes the conversion of glucosamine-6-phosphate to glucosamine-1-phosphate. The sequence is that of Phosphoglucosamine mutase from Bordetella petrii (strain ATCC BAA-461 / DSM 12804 / CCUG 43448).